The sequence spans 234 residues: Multicopy suppressor of SEC21 protein 27 (234 aa).

Over 1 to 47 the chain is Cytoplasmic; that stretch reads MQTPLESTDVKLDTLNEPSAHLIEKNVALPKDIFRSYLSYWIYEIAR. At Thr-3 the chain carries Phosphothreonine. A helical membrane pass occupies residues 48–68; sequence YTPVMILSLVIGVLVLLIIFF. At 69–72 the chain is on the extracellular side; sequence NDNE. The chain crosses the membrane as a helical span at residues 73–93; it reads ACVFNSAYYAYLSLVVLLIIL. The Cytoplasmic segment spans residues 94–234; that stretch reads GDGNPKLVSR…NIDALLKKTE (141 aa). Residues 231–234 are COPI binding; the sequence is KKTE.

The protein belongs to the DUP/COS family. Interacts with MST28. Binds to coatomer proteins of COPI and SEC23/SEC24 of COPII coated vesicles.

The protein resides in the endoplasmic reticulum. It is found in the golgi apparatus. The protein localises to the cytoplasmic vesicle. Its subcellular location is the COPI-coated vesicle membrane. It localises to the COPII-coated vesicle membrane. Functionally, involved in protein trafficking vesicle formation, probably by stabilizing of coatomer at the Golgi membrane and thus allowing the efficient formation of COPI coated vesicles. In Saccharomyces cerevisiae (strain ATCC 204508 / S288c) (Baker's yeast), this protein is Multicopy suppressor of SEC21 protein 27 (MST27).